The chain runs to 404 residues: Cytochrome b (404 aa).

The next 4 membrane-spanning stretches (helical) occupy residues 35–55 (FGSLAGLCLVIQILTGVFLAM), 79–101 (WLLRYMHANGASMFFIVVYLHFF), 116–136 (VWCLGVVILLLMIVTAFIGYV), and 182–202 (FFSLHYLLPFIIAGASILHLA). Positions 85 and 99 each coordinate heme b. Heme b-binding residues include histidine 186 and histidine 200. Histidine 205 is an a ubiquinone binding site. 4 helical membrane-spanning segments follow: residues 228 to 248 (IYVKDLVGWVAFAIFFSIFVF), 292 to 312 (LGGVAAIGLVFVSLLALPFIN), 324 to 344 (IHQKFFWLLVADCLLLGWIGC), and 351 to 370 (YVTIGQIASVGFFFYFAITP).

This sequence belongs to the cytochrome b family. The main subunits of complex b-c1 are: cytochrome b, cytochrome c1 and the Rieske protein. Requires heme b as cofactor.

The protein resides in the mitochondrion inner membrane. Component of the ubiquinol-cytochrome c reductase complex (complex III or cytochrome b-c1 complex) that is part of the mitochondrial respiratory chain. The b-c1 complex mediates electron transfer from ubiquinol to cytochrome c. Contributes to the generation of a proton gradient across the mitochondrial membrane that is then used for ATP synthesis. This chain is Cytochrome b (MT-CYB), found in Marchantia polymorpha (Common liverwort).